Reading from the N-terminus, the 337-residue chain is Retrovirus-related Pol polyprotein from type-1 retrotransposable element R1 (337 aa).

Residues 1–118 form the Reverse transcriptase domain; it reads GCPQGSISGP…KSARYLGVCM (118 aa). The tract at residues 253-337 is nucleic acid-binding endonuclease; the sequence is KRARSCKLMK…ACPCGAPRED (85 aa).

The enzyme catalyses DNA(n) + a 2'-deoxyribonucleoside 5'-triphosphate = DNA(n+1) + diphosphate. In Nasonia vitripennis (Parasitic wasp), this protein is Retrovirus-related Pol polyprotein from type-1 retrotransposable element R1.